Here is a 504-residue protein sequence, read N- to C-terminus: MEEFKRYFELDRSQQHDFIYPLIFQEYIYALAHDRDLNRSIFFESAGYDKKYSFLIVKRLITHLITQMYQQNHFYTNDSNQNKFLGYNTNLYSQMIFEGFAVVVEIPFYLRFRSFLEGKERVKSHNLRSLHSIFPFLEDKFSHLNYVLDILIPHSIHLEILVQTLRYWVKXPSSLHLLRFFLHEYPNRNSLITPKKSSFSFSKRNQRFFLLLYNFHVCEYESIFVFLRNQSSHLCSISSETFIERISFYKKIKLEVFTKDFKAILWVFKDPFLHYVRYRGKSILXSKGSSLLMNKWKYYLVNFWECYFYMWSQSRRIHIXQLSKNSLDFLGYLSSVRLKPSMVRSQMIENSFLIENASKKFDSLVXITPMIASLSKAXFXNVLGHPMSKPVWADLSDSDIIDRFGRIYRNLSHYHSGSLQKMSLYRIKYILRLSCARTLARKHKSTVRAFLKRLGVGLLEEFFTEEEQVFYLTFPKASXTIGKLYRRRIGYEDIFXXXDPXNHE.

This sequence belongs to the intron maturase 2 family. MatK subfamily.

Its subcellular location is the plastid. It is found in the chloroplast. Its function is as follows. Usually encoded in the trnK tRNA gene intron. Probably assists in splicing its own and other chloroplast group II introns. This Prionotes cerinthoides (Climbing heath) protein is Maturase K.